The chain runs to 780 residues: Cyclin-F (780 aa).

Positions lysine 20–arginine 28 match the Nuclear localization signal 1 motif. Positions asparagine 29 to alanine 76 constitute an F-box domain. In terms of domain architecture, Cyclin N-terminal spans glutamine 288–isoleucine 405. 3 consecutive short sequence motifs (d box) follow at residues arginine 310 to leucine 313, arginine 343 to leucine 346, and arginine 349 to leucine 352. 3 disordered regions span residues glutamine 544–serine 594, glutamine 651–proline 733, and cysteine 745–leucine 780. Positions arginine 568 to arginine 574 match the Nuclear localization signal 2 motif. Residues arginine 582–lysine 761 form a PEST region. Positions phenylalanine 585–serine 594 are enriched in polar residues. 2 stretches are compositionally biased toward low complexity: residues serine 695–serine 708 and serine 719–threonine 731. The short motif at arginine 762–leucine 765 is the D box 4 element.

Belongs to the cyclin family. Cyclin AB subfamily. Component of the SCF(CCNF) complex consisting of CUL1, RBX1, SKP1 and CCNF. Interacts with SKP1. Interacts with CUL1. Interacts with CCNB1; interaction is required for nuclear localization of CCNB1. Interacts with CCP110; this interaction leads to CCP110 ubiquitination and degradation via the proteasome pathway. Interacts (via the Cyclin N-terminal domain) with MYBL2/BMYB. Interacts with FZR1/CDH1 (via N-terminus). Interacts with RRM2 (via Cy motif and when phosphorylated at 'Thr-33'); the interaction occurs exclusively in G2 and early M. Interacts with CDC6 (via Cy motif); the interaction takes place during G2 and M phase. Post-translationally, degraded when the spindle assembly checkpoint is activated during the G2-M transition. Degradation is not dependent on the proteasome or ubiquitin and depends on the C-terminal PEST sequence. In terms of processing, phosphorylated just before cells enter into mitosis. Ubiquitinated by the anaphase-promoting complex (APC/C); leading to its degradation by the proteasome.

It localises to the nucleus. The protein resides in the cytoplasm. It is found in the perinuclear region. The protein localises to the cytoskeleton. Its subcellular location is the microtubule organizing center. It localises to the centrosome. The protein resides in the centriole. In terms of biological role, substrate recognition component of a SCF (SKP1-CUL1-F-box protein) E3 ubiquitin-protein ligase complex which mediates the ubiquitination and subsequent proteasomal degradation of target proteins. The SCF(CCNF) E3 ubiquitin-protein ligase complex is an integral component of the ubiquitin proteasome system (UPS) and links proteasome degradation to the cell cycle. Mediates the substrate recognition and the proteasomal degradation of various target proteins involved in the regulation of cell cycle progression and in the maintenance of genome stability. Mediates the ubiquitination and subsequent proteasomal degradation of CP110 during G2 phase, thereby acting as an inhibitor of centrosome reduplication. In G2, mediates the ubiquitination and proteasomal degradation of CDC6, thereby suppressing DNA re-replication and preventing genome instability. Involved in the ubiquitination and degradation of the substrate adapter CDH1 of the anaphase-promoting complex (APC/C), thereby acting as an antagonist of APC/C in regulating G1 progression and S phase entry. May play a role in the G2 cell cycle checkpoint control after DNA damage, possibly by promoting the ubiquitination of MYBL2/BMYB. In Rattus norvegicus (Rat), this protein is Cyclin-F (Ccnf).